A 793-amino-acid polypeptide reads, in one-letter code: Phenylalanine--tRNA ligase beta subunit (793 aa).

Positions alanine 39–arginine 148 constitute a tRNA-binding domain. Residues proline 400–isoleucine 476 form the B5 domain. Aspartate 454, aspartate 460, glutamate 463, and glutamate 464 together coordinate Mg(2+). The FDX-ACB domain maps to serine 698–arginine 791.

It belongs to the phenylalanyl-tRNA synthetase beta subunit family. Type 1 subfamily. As to quaternary structure, tetramer of two alpha and two beta subunits. Mg(2+) serves as cofactor.

Its subcellular location is the cytoplasm. It carries out the reaction tRNA(Phe) + L-phenylalanine + ATP = L-phenylalanyl-tRNA(Phe) + AMP + diphosphate + H(+). The sequence is that of Phenylalanine--tRNA ligase beta subunit from Acinetobacter baylyi (strain ATCC 33305 / BD413 / ADP1).